The primary structure comprises 468 residues: Chitoporin (468 aa).

The N-terminal stretch at 1–32 is a signal peptide; the sequence is MRTFSGKRSTLALAIAGVTAMSGFMAMPEARA.

It belongs to the outer membrane porin (Opr) (TC 1.B.25) family.

The protein localises to the cell outer membrane. Its function is as follows. Involved in the uptake of chitosugars. The chain is Chitoporin (chiP) from Escherichia coli (strain K12).